A 113-amino-acid polypeptide reads, in one-letter code: Endoribonuclease SymE (113 aa).

In terms of domain architecture, SpoVT-AbrB spans 29–74 (SRYPDYSRIPAITLKGQWLEAAGFATGTAVDVKVMEGCIVLTAQPP).

It belongs to the SymE family.

It is found in the cytoplasm. Involved in the degradation and recycling of damaged RNA. It is itself a target for degradation by the ATP-dependent protease Lon. The protein is Endoribonuclease SymE of Escherichia coli (strain K12 / MC4100 / BW2952).